The sequence spans 463 residues: Cis-zeatin O-glucosyltransferase 2 (463 aa).

Catalysis depends on His-21, which acts as the Proton acceptor. His-21 and Asn-91 together coordinate an anthocyanidin. The active-site Charge relay is Asp-127. The UDP-alpha-D-glucose site is built by Ala-339, Gln-341, His-356, Trp-359, Asn-360, Ser-361, Glu-364, Asp-380, and Gln-381.

It belongs to the UDP-glycosyltransferase family. Highly expressed in root. Expressed at much lower level in kernel. Weakly or not expressed in expressed in stems and leaves.

The catalysed reaction is cis-zeatin + UDP-alpha-D-glucose = O-beta-D-glucosyl-cis-zeatin + UDP + H(+). In terms of biological role, utilizes UDP-glucose as the sugar donor and catalyzes the formation of O-beta-D-glucosyl-cis-zeatin from cis-zeatin. May regulate active versus storage forms of cytokinins and could have an impact on seed growth. In Zea mays (Maize), this protein is Cis-zeatin O-glucosyltransferase 2.